A 277-amino-acid polypeptide reads, in one-letter code: MIIELAKNYGFCFGVKRAIKKAEQIKDAATIGPLIHNNEEISRLQKNFNVKTLENIQALSNEKKAIIRTHGITKQDLEELRKKDIEIFDATCPFVTKPQQICEQMSKEGYEVVIFGDENHPEVKGVKSYVSTKAYVVLDKKELQNIKLPNKIAVVSQTTKKPEHFMEIVNFLILKTKEVRVFNTICDATFKNQDAIKELSLKSDVMVVVGGKNSANTKQLFLIAKTNCEDSYLIETEEELKKEWFLDKKHCGISAGASTPDWIIQKVIAKIKNFKIN.

C12 provides a ligand contact to [4Fe-4S] cluster. 2 residues coordinate (2E)-4-hydroxy-3-methylbut-2-enyl diphosphate: H36 and H70. Dimethylallyl diphosphate-binding residues include H36 and H70. H36 and H70 together coordinate isopentenyl diphosphate. Residue C92 coordinates [4Fe-4S] cluster. Residue H120 coordinates (2E)-4-hydroxy-3-methylbut-2-enyl diphosphate. Residue H120 participates in dimethylallyl diphosphate binding. H120 serves as a coordination point for isopentenyl diphosphate. Catalysis depends on E122, which acts as the Proton donor. Position 158 (T158) interacts with (2E)-4-hydroxy-3-methylbut-2-enyl diphosphate. C186 contributes to the [4Fe-4S] cluster binding site. (2E)-4-hydroxy-3-methylbut-2-enyl diphosphate is bound by residues S214, N216, and S258. Dimethylallyl diphosphate contacts are provided by S214, N216, and S258. The isopentenyl diphosphate site is built by S214, N216, and S258.

It belongs to the IspH family. Requires [4Fe-4S] cluster as cofactor.

The enzyme catalyses isopentenyl diphosphate + 2 oxidized [2Fe-2S]-[ferredoxin] + H2O = (2E)-4-hydroxy-3-methylbut-2-enyl diphosphate + 2 reduced [2Fe-2S]-[ferredoxin] + 2 H(+). The catalysed reaction is dimethylallyl diphosphate + 2 oxidized [2Fe-2S]-[ferredoxin] + H2O = (2E)-4-hydroxy-3-methylbut-2-enyl diphosphate + 2 reduced [2Fe-2S]-[ferredoxin] + 2 H(+). The protein operates within isoprenoid biosynthesis; dimethylallyl diphosphate biosynthesis; dimethylallyl diphosphate from (2E)-4-hydroxy-3-methylbutenyl diphosphate: step 1/1. It functions in the pathway isoprenoid biosynthesis; isopentenyl diphosphate biosynthesis via DXP pathway; isopentenyl diphosphate from 1-deoxy-D-xylulose 5-phosphate: step 6/6. Functionally, catalyzes the conversion of 1-hydroxy-2-methyl-2-(E)-butenyl 4-diphosphate (HMBPP) into a mixture of isopentenyl diphosphate (IPP) and dimethylallyl diphosphate (DMAPP). Acts in the terminal step of the DOXP/MEP pathway for isoprenoid precursor biosynthesis. The sequence is that of 4-hydroxy-3-methylbut-2-enyl diphosphate reductase from Campylobacter jejuni subsp. jejuni serotype O:23/36 (strain 81-176).